The chain runs to 25 residues: Omega-conotoxin MVIIB (25 aa).

3 disulfides stabilise this stretch: Cys1-Cys16, Cys8-Cys20, and Cys15-Cys25. A Cysteine amide modification is found at Cys25.

The protein belongs to the conotoxin O1 superfamily. In terms of tissue distribution, expressed by the venom duct.

The protein resides in the secreted. Omega-conotoxins act at presynaptic membranes, they bind and block voltage-gated calcium channels (Cav). The sequence is that of Omega-conotoxin MVIIB from Conus magus (Magical cone).